The sequence spans 172 residues: Odorant-binding protein (172 aa).

A signal peptide spans 1–15 (MVKFLLIVLALGVSC). 2 disulfides stabilise this stretch: Cys60–Cys64 and Cys79–Cys170.

Belongs to the calycin superfamily. Lipocalin family. Homodimer.

The protein resides in the secreted. Functionally, this protein is found in nasal epithelium and it binds a wide variety of chemical odorants. This chain is Odorant-binding protein (Obp1f), found in Rattus norvegicus (Rat).